Reading from the N-terminus, the 479-residue chain is Ribulose bisphosphate carboxylase large chain (479 aa).

The propeptide occupies 1-2; it reads MS. 2 residues coordinate substrate: Asn123 and Thr173. Residue Lys175 is the Proton acceptor of the active site. Substrate is bound at residue Lys177. Residues Lys201, Asp203, and Glu204 each coordinate Mg(2+). The residue at position 201 (Lys201) is an N6-carboxylysine. Position 208 is a phosphoserine (Ser208). His294 serves as the catalytic Proton acceptor. Residues Arg295 and His327 each coordinate substrate. Thr330 carries the phosphothreonine modification. Ser379 lines the substrate pocket.

The protein belongs to the RuBisCO large chain family. Type I subfamily. Heterohexadecamer of 8 large chains and 8 small chains; disulfide-linked. The disulfide link is formed within the large subunit homodimers. The cofactor is Mg(2+). Post-translationally, the disulfide bond which can form in the large chain dimeric partners within the hexadecamer appears to be associated with oxidative stress and protein turnover.

The protein localises to the plastid. It localises to the chloroplast. It catalyses the reaction 2 (2R)-3-phosphoglycerate + 2 H(+) = D-ribulose 1,5-bisphosphate + CO2 + H2O. It carries out the reaction D-ribulose 1,5-bisphosphate + O2 = 2-phosphoglycolate + (2R)-3-phosphoglycerate + 2 H(+). In terms of biological role, ruBisCO catalyzes two reactions: the carboxylation of D-ribulose 1,5-bisphosphate, the primary event in carbon dioxide fixation, as well as the oxidative fragmentation of the pentose substrate in the photorespiration process. Both reactions occur simultaneously and in competition at the same active site. This Barbarea verna (Land cress) protein is Ribulose bisphosphate carboxylase large chain.